Consider the following 285-residue polypeptide: Small ribosomal subunit protein uS5x (285 aa).

Basic and acidic residues predominate over residues 1–19; that stretch reads MAERGGERGVERGGERGDF. A disordered region spans residues 1-51; that stretch reads MAERGGERGVERGGERGDFGRGFGGRGGRGDRGGRGRGGRGGRRGGRASEE. Residues 35-46 are compositionally biased toward basic residues; the sequence is RGRGGRGGRRGG. An S5 DRBM domain is found at 96–159; that stretch reads LKDEVMKIMP…ILAKLSVVPV (64 aa).

It belongs to the universal ribosomal protein uS5 family. As to quaternary structure, interacts with MBD6.

In terms of biological role, component of the ribosome, a large ribonucleoprotein complex responsible for the synthesis of proteins in the cell. The small ribosomal subunit (SSU) binds messenger RNAs (mRNAs) and translates the encoded message by selecting cognate aminoacyl-transfer RNA (tRNA) molecules. The large subunit (LSU) contains the ribosomal catalytic site termed the peptidyl transferase center (PTC), which catalyzes the formation of peptide bonds, thereby polymerizing the amino acids delivered by tRNAs into a polypeptide chain. The nascent polypeptides leave the ribosome through a tunnel in the LSU and interact with protein factors that function in enzymatic processing, targeting, and the membrane insertion of nascent chains at the exit of the ribosomal tunnel. Plays a role in the assembly and function of the 40S ribosomal subunit. Mutations in this protein affects the control of translational fidelity. Involved in nucleolar processing of pre-18S ribosomal RNA and ribosome assembly. Also involved in RNA-directed DNA methylation (RdDM). This chain is Small ribosomal subunit protein uS5x, found in Arabidopsis thaliana (Mouse-ear cress).